The primary structure comprises 291 residues: Phosphatidylglycerol--prolipoprotein diacylglyceryl transferase (291 aa).

7 consecutive transmembrane segments (helical) span residues 21–41, 60–80, 96–116, 124–144, 198–218, 225–245, and 258–278; these read IALH…MWLA, LLYA…VLFY, WDGG…MWWF, FLQV…MGRI, SQLY…NLYI, GSVS…VEFF, and ISMG…MMIW. Residue Arg-143 participates in a 1,2-diacyl-sn-glycero-3-phospho-(1'-sn-glycerol) binding.

The protein belongs to the Lgt family.

The protein resides in the cell inner membrane. It carries out the reaction L-cysteinyl-[prolipoprotein] + a 1,2-diacyl-sn-glycero-3-phospho-(1'-sn-glycerol) = an S-1,2-diacyl-sn-glyceryl-L-cysteinyl-[prolipoprotein] + sn-glycerol 1-phosphate + H(+). It functions in the pathway protein modification; lipoprotein biosynthesis (diacylglyceryl transfer). Catalyzes the transfer of the diacylglyceryl group from phosphatidylglycerol to the sulfhydryl group of the N-terminal cysteine of a prolipoprotein, the first step in the formation of mature lipoproteins. The sequence is that of Phosphatidylglycerol--prolipoprotein diacylglyceryl transferase from Photorhabdus laumondii subsp. laumondii (strain DSM 15139 / CIP 105565 / TT01) (Photorhabdus luminescens subsp. laumondii).